Reading from the N-terminus, the 365-residue chain is Chorismate synthase (365 aa).

Residue Arg47 coordinates NADP(+). Residues 124–126 (RAS), Gly287, 302–306 (KPTAT), and Arg328 each bind FMN.

It belongs to the chorismate synthase family. Homotetramer. FMNH2 serves as cofactor.

It catalyses the reaction 5-O-(1-carboxyvinyl)-3-phosphoshikimate = chorismate + phosphate. It participates in metabolic intermediate biosynthesis; chorismate biosynthesis; chorismate from D-erythrose 4-phosphate and phosphoenolpyruvate: step 7/7. Functionally, catalyzes the anti-1,4-elimination of the C-3 phosphate and the C-6 proR hydrogen from 5-enolpyruvylshikimate-3-phosphate (EPSP) to yield chorismate, which is the branch point compound that serves as the starting substrate for the three terminal pathways of aromatic amino acid biosynthesis. This reaction introduces a second double bond into the aromatic ring system. The sequence is that of Chorismate synthase from Prochlorococcus marinus (strain MIT 9312).